The primary structure comprises 446 residues: Ribosomal protein uS12 methylthiotransferase RimO (446 aa).

Positions 4-119 (LKVGLISLGC…LVENINNFIS (116 aa)) constitute an MTTase N-terminal domain. [4Fe-4S] cluster contacts are provided by Cys13, Cys48, Cys82, Cys157, Cys161, and Cys164. Positions 143 to 373 (TTKSHTAYLR…MMLQKHIIYS (231 aa)) constitute a Radical SAM core domain. The TRAM domain maps to 376–442 (KYKIGNKYKV…EYDLVGVVYD (67 aa)).

Belongs to the methylthiotransferase family. RimO subfamily. [4Fe-4S] cluster is required as a cofactor.

The protein localises to the cytoplasm. The enzyme catalyses L-aspartate(89)-[ribosomal protein uS12]-hydrogen + (sulfur carrier)-SH + AH2 + 2 S-adenosyl-L-methionine = 3-methylsulfanyl-L-aspartate(89)-[ribosomal protein uS12]-hydrogen + (sulfur carrier)-H + 5'-deoxyadenosine + L-methionine + A + S-adenosyl-L-homocysteine + 2 H(+). Catalyzes the methylthiolation of an aspartic acid residue of ribosomal protein uS12. The polypeptide is Ribosomal protein uS12 methylthiotransferase RimO (Clostridium kluyveri (strain ATCC 8527 / DSM 555 / NBRC 12016 / NCIMB 10680 / K1)).